A 359-amino-acid chain; its full sequence is Proton-coupled zinc antiporter SLC30A2 (359 aa).

Residues 1-56 lie on the Cytoplasmic side of the membrane; sequence MASRSFFGALWKSEASRIPPVNLPSVELAVQSNHYCHAQKDSGSHPNSEKQRARRK. The Mitochondrial localization signal signature appears at 34–37; it reads HYCH. C36 provides a ligand contact to Zn(2+). Residues 57-77 traverse the membrane as a helical segment; the sequence is LYVASAICLVFMIGEIIGGYL. At 78 to 86 the chain is on the lumenal side; it reads AQSLAIMTD. Residues 87–107 traverse the membrane as a helical segment; it reads AAHLLTDFASMLISLFSLWVS. Zn(2+)-binding residues include H89 and D93. The Cytoplasmic portion of the chain corresponds to 108 to 123; the sequence is SRPATKTMNFGWQRAE. The chain crosses the membrane as a helical span at residues 124 to 144; sequence ILGALLSVLSIWVVTGVLVYL. The Lumenal segment spans residues 145-159; sequence AVQRLISGDYEIKGD. The helical transmembrane segment at 160-180 threads the bilayer; it reads TMLITSGCAVAVNIIMGLALH. The Cytoplasmic portion of the chain corresponds to 181 to 207; the sequence is QSGHGHSHGHSHEDSSQQQQNPSVRAA. The chain crosses the membrane as a helical span at residues 208 to 228; it reads FIHVVGDLLQSVGVLVAAYII. Residues H210 and D214 each contribute to the Zn(2+) site. At 229–236 the chain is on the lumenal side; the sequence is YFKPEYKY. The helical transmembrane segment at 237 to 257 threads the bilayer; the sequence is VDPICTFLFSILVLGTTLTIL. Topologically, residues 258–291 are cytoplasmic; the sequence is RDVILVLMEGTPKGVDFTTVKNLLLSVDGVEALH. The short motif at 281-282 is the Lysosomal targeting motif element; the sequence is LL. S283 bears the Phosphoserine mark. Zn(2+) contacts are provided by H291, H308, and E342. The helical transmembrane segment at 292–312 threads the bilayer; that stretch reads SLHIWALTVAQPVLSVHIAIA. Topologically, residues 313-359 are lumenal; the sequence is QNVDAQAVLKVARDRLQGKFNFHTMTIQIESYSEDMKSCQECQGPSE.

This sequence belongs to the cation diffusion facilitator (CDF) transporter (TC 2.A.4) family. SLC30A subfamily. Homodimer. Interacts (via lysosomal targeting motif) with AP3D1; in AP-3-mediated transport to lysosomes. Interacts with TMEM163. Phosphorylated at Ser-283. Phosphorylation at Ser-283 prevents localization to lysosomes. Dephosphorylation of Ser-283 which triggers localization to lysosomes, accumulation of zinc into lysosomes and lysosomal-mediated cell death is induced by TNF-alpha. In terms of tissue distribution, detected in intestine, kidney, seminal vesicles and testis.

It localises to the cytoplasmic vesicle. The protein localises to the secretory vesicle membrane. The protein resides in the zymogen granule membrane. It is found in the endosome membrane. Its subcellular location is the lysosome membrane. It localises to the mitochondrion inner membrane. It catalyses the reaction Zn(2+)(in) + 2 H(+)(out) = Zn(2+)(out) + 2 H(+)(in). In terms of biological role, electroneutral proton-coupled antiporter concentrating zinc ions into a variety of intracellular organelles including endosomes, zymogen granules and mitochondria. Thereby, plays a crucial role in cellular zinc homeostasis to confer upon cells protection against its potential cytotoxicity. Regulates the zinc concentration of milk, through the transport of zinc ions into secretory vesicles of mammary cells. By concentrating zinc ions into lysosomes participates to lysosomal-mediated cell death during early mammary gland involution. This is Proton-coupled zinc antiporter SLC30A2 from Rattus norvegicus (Rat).